We begin with the raw amino-acid sequence, 177 residues long: Protein Abitram (177 aa).

The protein belongs to the ABITRAM family.

It is found in the nucleus speckle. The protein resides in the cell projection. Its subcellular location is the lamellipodium. The protein localises to the nucleus. It localises to the growth cone. It is found in the dendrite. Functionally, may regulate actin polymerization, filopodia dynamics and arborization of neurons. The sequence is that of Protein Abitram (abitram) from Danio rerio (Zebrafish).